A 413-amino-acid polypeptide reads, in one-letter code: Arginine biosynthesis bifunctional protein ArgJ (413 aa).

The substrate site is built by Thr158, Lys184, Thr195, Glu285, Asn408, and Ser413. Thr195 acts as the Nucleophile in catalysis.

It belongs to the ArgJ family. In terms of assembly, heterotetramer of two alpha and two beta chains.

The protein resides in the cytoplasm. It catalyses the reaction N(2)-acetyl-L-ornithine + L-glutamate = N-acetyl-L-glutamate + L-ornithine. It carries out the reaction L-glutamate + acetyl-CoA = N-acetyl-L-glutamate + CoA + H(+). The protein operates within amino-acid biosynthesis; L-arginine biosynthesis; L-ornithine and N-acetyl-L-glutamate from L-glutamate and N(2)-acetyl-L-ornithine (cyclic): step 1/1. It participates in amino-acid biosynthesis; L-arginine biosynthesis; N(2)-acetyl-L-ornithine from L-glutamate: step 1/4. Catalyzes two activities which are involved in the cyclic version of arginine biosynthesis: the synthesis of N-acetylglutamate from glutamate and acetyl-CoA as the acetyl donor, and of ornithine by transacetylation between N(2)-acetylornithine and glutamate. The chain is Arginine biosynthesis bifunctional protein ArgJ from Agrobacterium fabrum (strain C58 / ATCC 33970) (Agrobacterium tumefaciens (strain C58)).